A 190-amino-acid chain; its full sequence is Xanthine phosphoribosyltransferase (190 aa).

Xanthine-binding residues include Leu-20 and Asn-27. 128–132 (ANGKA) lines the 5-phospho-alpha-D-ribose 1-diphosphate pocket. Residue Lys-156 coordinates xanthine.

Belongs to the purine/pyrimidine phosphoribosyltransferase family. Xpt subfamily. Homodimer.

Its subcellular location is the cytoplasm. The catalysed reaction is XMP + diphosphate = xanthine + 5-phospho-alpha-D-ribose 1-diphosphate. Its pathway is purine metabolism; XMP biosynthesis via salvage pathway; XMP from xanthine: step 1/1. In terms of biological role, converts the preformed base xanthine, a product of nucleic acid breakdown, to xanthosine 5'-monophosphate (XMP), so it can be reused for RNA or DNA synthesis. This Pseudomonas putida (strain ATCC 700007 / DSM 6899 / JCM 31910 / BCRC 17059 / LMG 24140 / F1) protein is Xanthine phosphoribosyltransferase.